Consider the following 653-residue polypeptide: DNA ligase (653 aa).

NAD(+) contacts are provided by residues 32–36 and 80–81; these read NFEYD and SL. Residue lysine 104 is the N6-AMP-lysine intermediate of the active site. Residues arginine 125, glutamate 159, and lysine 297 each contribute to the NAD(+) site. Cysteine 386, cysteine 389, cysteine 406, and cysteine 411 together coordinate Zn(2+). A BRCT domain is found at 571–653; it reads GGSEKLKGLT…EEFIQLLNEA (83 aa).

It belongs to the NAD-dependent DNA ligase family. LigA subfamily. It depends on Mg(2+) as a cofactor. Mn(2+) is required as a cofactor.

It carries out the reaction NAD(+) + (deoxyribonucleotide)n-3'-hydroxyl + 5'-phospho-(deoxyribonucleotide)m = (deoxyribonucleotide)n+m + AMP + beta-nicotinamide D-nucleotide.. Functionally, DNA ligase that catalyzes the formation of phosphodiester linkages between 5'-phosphoryl and 3'-hydroxyl groups in double-stranded DNA using NAD as a coenzyme and as the energy source for the reaction. It is essential for DNA replication and repair of damaged DNA. In Lachnoclostridium phytofermentans (strain ATCC 700394 / DSM 18823 / ISDg) (Clostridium phytofermentans), this protein is DNA ligase.